The sequence spans 272 residues: MEWNYLYNHFDPVAFDLWGLKVHWYGIAYVLALLVALWVAKWIAKKDAYPLSNEQLESYFIWVEVGVILGARLGYILFYDPFTAYYLTHPWQIFNPFQNGEFIGIRGMSYHGAVIGFLIASFLFAQRHGVKFWMLMDLVGISVPLGYVFGRIGNFLNQELIGRVTEVPWGIYVAGVLRHPSQLYEAFLEGIVLFVILYAWRSRVKFTGQLGIMYLILYALARFVAEFWREPDAQIGYLVGGVTMGQLLSLAMAIPCLVLWGYLAKKERGKIL.

4 helical membrane passes run 24–44, 59–79, 102–122, and 129–149; these read WYGI…KWIA, YFIW…ILFY, FIGI…IASF, and GVKF…GYVF. Residue Arg-151 participates in a 1,2-diacyl-sn-glycero-3-phospho-(1'-sn-glycerol) binding. Transmembrane regions (helical) follow at residues 180–200, 208–228, and 244–264; these read PSQL…LYAW, GQLG…AEFW, and MGQL…GYLA.

It belongs to the Lgt family.

Its subcellular location is the cell inner membrane. The catalysed reaction is L-cysteinyl-[prolipoprotein] + a 1,2-diacyl-sn-glycero-3-phospho-(1'-sn-glycerol) = an S-1,2-diacyl-sn-glyceryl-L-cysteinyl-[prolipoprotein] + sn-glycerol 1-phosphate + H(+). Its pathway is protein modification; lipoprotein biosynthesis (diacylglyceryl transfer). In terms of biological role, catalyzes the transfer of the diacylglyceryl group from phosphatidylglycerol to the sulfhydryl group of the N-terminal cysteine of a prolipoprotein, the first step in the formation of mature lipoproteins. This is Phosphatidylglycerol--prolipoprotein diacylglyceryl transferase from Wolinella succinogenes (strain ATCC 29543 / DSM 1740 / CCUG 13145 / JCM 31913 / LMG 7466 / NCTC 11488 / FDC 602W) (Vibrio succinogenes).